Reading from the N-terminus, the 271-residue chain is GPN-loop GTPase 3 (271 aa).

Residue 13 to 18 (GVGKST) participates in GTP binding. Residues 70-72 (GPN) carry the Gly-Pro-Asn (GPN)-loop; involved in dimer interface motif. A GTP-binding site is contributed by 173-176 (SKMD).

The protein belongs to the GPN-loop GTPase family. Heterodimers with GPN1 or GPN2. Binds to RNA polymerase II (RNAPII).

In terms of biological role, small GTPase required for proper nuclear import of RNA polymerase II and III (RNAPII and RNAPIII). May act at an RNAP assembly step prior to nuclear import. The chain is GPN-loop GTPase 3 from Yarrowia lipolytica (strain CLIB 122 / E 150) (Yeast).